The following is a 532-amino-acid chain: Methionine--tRNA ligase (532 aa).

Residues 16 to 26 (YYVNDVPHLGS) carry the 'HIGH' region motif. Zn(2+) contacts are provided by Cys131, Cys134, Cys149, and His152. Positions 305-309 (KMGKS) match the 'KMSKS' region motif. Lys308 contacts ATP.

It belongs to the class-I aminoacyl-tRNA synthetase family. MetG type 2A subfamily. In terms of assembly, monomer. It depends on Zn(2+) as a cofactor.

It localises to the cytoplasm. It carries out the reaction tRNA(Met) + L-methionine + ATP = L-methionyl-tRNA(Met) + AMP + diphosphate. Functionally, is required not only for elongation of protein synthesis but also for the initiation of all mRNA translation through initiator tRNA(fMet) aminoacylation. In Synechocystis sp. (strain ATCC 27184 / PCC 6803 / Kazusa), this protein is Methionine--tRNA ligase (metG).